We begin with the raw amino-acid sequence, 288 residues long: Bifunctional protein FolD 1 (288 aa).

NADP(+) contacts are provided by residues glycine 170–glycine 172 and isoleucine 236.

Belongs to the tetrahydrofolate dehydrogenase/cyclohydrolase family. Homodimer.

The catalysed reaction is (6R)-5,10-methylene-5,6,7,8-tetrahydrofolate + NADP(+) = (6R)-5,10-methenyltetrahydrofolate + NADPH. It carries out the reaction (6R)-5,10-methenyltetrahydrofolate + H2O = (6R)-10-formyltetrahydrofolate + H(+). The protein operates within one-carbon metabolism; tetrahydrofolate interconversion. Its function is as follows. Catalyzes the oxidation of 5,10-methylenetetrahydrofolate to 5,10-methenyltetrahydrofolate and then the hydrolysis of 5,10-methenyltetrahydrofolate to 10-formyltetrahydrofolate. The chain is Bifunctional protein FolD 1 from Deinococcus geothermalis (strain DSM 11300 / CIP 105573 / AG-3a).